Reading from the N-terminus, the 63-residue chain is Large ribosomal subunit protein bL35 (63 aa).

Composition is skewed to basic residues over residues 1–25 (MPKMKSKSSAAKRFKKTANGFKHRQ) and 32–47 (LTKKSTKRKRHLRPKK). The segment at 1 to 55 (MPKMKSKSSAAKRFKKTANGFKHRQSFTSHILTKKSTKRKRHLRPKKQVNPSDVP) is disordered.

The protein belongs to the bacterial ribosomal protein bL35 family.

This Hahella chejuensis (strain KCTC 2396) protein is Large ribosomal subunit protein bL35.